Here is an 84-residue protein sequence, read N- to C-terminus: CDC42 small effector protein 2 (84 aa).

Residues Cys10 and Cys11 are each lipidated (S-palmitoyl cysteine). The region spanning 29–42 (IGEPTNFVHTAHVG) is the CRIB domain. A phosphoserine mark is found at Ser43 and Ser52.

This sequence belongs to the CDC42SE/SPEC family. As to quaternary structure, interacts with CDC42 (in GTP-bound form). Interacts weakly with RAC1 and not at all with RHOA.

The protein localises to the cytoplasm. It localises to the cytoskeleton. The protein resides in the cell membrane. It is found in the cell projection. Its subcellular location is the phagocytic cup. Its function is as follows. Probably involved in the organization of the actin cytoskeleton by acting downstream of CDC42, inducing actin filament assembly. Alters CDC42-induced cell shape changes. In activated T-cells, may play a role in CDC42-mediated F-actin accumulation at the immunological synapse. May play a role in early contractile events in phagocytosis in macrophages. This is CDC42 small effector protein 2 (CDC42SE2) from Bos taurus (Bovine).